Consider the following 164-residue polypeptide: Large ribosomal subunit protein uL10 (164 aa).

Belongs to the universal ribosomal protein uL10 family. As to quaternary structure, part of the ribosomal stalk of the 50S ribosomal subunit. The N-terminus interacts with L11 and the large rRNA to form the base of the stalk. The C-terminus forms an elongated spine to which L12 dimers bind in a sequential fashion forming a multimeric L10(L12)X complex.

Forms part of the ribosomal stalk, playing a central role in the interaction of the ribosome with GTP-bound translation factors. The sequence is that of Large ribosomal subunit protein uL10 from Aliivibrio fischeri (strain MJ11) (Vibrio fischeri).